The primary structure comprises 104 residues: Complex III assembly factor LYRM7 (104 aa).

Belongs to the complex I LYR family. In terms of assembly, interacts with UQCRFS1.

It localises to the mitochondrion matrix. Assembly factor required for Rieske Fe-S protein UQCRFS1 incorporation into the cytochrome b-c1 (CIII) complex. Functions as a chaperone, binding to this subunit within the mitochondrial matrix and stabilizing it prior to its translocation and insertion into the late CIII dimeric intermediate within the mitochondrial inner membrane. In Tetraodon nigroviridis (Spotted green pufferfish), this protein is Complex III assembly factor LYRM7 (lyrm7).